A 106-amino-acid polypeptide reads, in one-letter code: Cell cycle protein GpsB (106 aa).

Positions 34-67 (LDVIIQDYDNFKQEIDRLKAENEKLKKSTPAVEQ) form a coiled coil. Residues 55 to 83 (NEKLKKSTPAVEQSRSRSQQPPTSQVNYD) are disordered. Positions 70 to 79 (SRSQQPPTSQ) are enriched in low complexity.

Belongs to the GpsB family. Forms polymers through the coiled coil domains. Interacts with PBP1, MreC and EzrA.

The protein resides in the cytoplasm. Functionally, divisome component that associates with the complex late in its assembly, after the Z-ring is formed, and is dependent on DivIC and PBP2B for its recruitment to the divisome. Together with EzrA, is a key component of the system that regulates PBP1 localization during cell cycle progression. Its main role could be the removal of PBP1 from the cell pole after pole maturation is completed. Also contributes to the recruitment of PBP1 to the division complex. Not essential for septum formation. This Oceanobacillus iheyensis (strain DSM 14371 / CIP 107618 / JCM 11309 / KCTC 3954 / HTE831) protein is Cell cycle protein GpsB.